The chain runs to 58 residues: Histatherin (58 aa).

The signal sequence occupies residues 1–19; the sequence is MKIFIFIFIMALILAMIRA.

The protein belongs to the histatin/statherin family. Expressed in mammary glands.

The protein resides in the secreted. This chain is Histatherin, found in Bos taurus (Bovine).